A 408-amino-acid polypeptide reads, in one-letter code: UDP-glucose 4-epimerase 2 (408 aa).

Residue 13–44 (TVLVTGGAGYIGSHAVLQLLLAGFRAVVVDNL) participates in NAD(+) binding. Position 138 (serine 138) interacts with substrate. Tyrosine 162 (proton acceptor) is an active-site residue. Residues 369–408 (GSPKQNGHCTNGFSESTRHNGHNGYGLVDSAKHNGNGHFH) form a disordered region. A compositionally biased stretch (polar residues) spans 370-383 (SPKQNGHCTNGFSE).

The protein belongs to the NAD(P)-dependent epimerase/dehydratase family. Requires NAD(+) as cofactor.

The enzyme catalyses UDP-alpha-D-glucose = UDP-alpha-D-galactose. The protein operates within carbohydrate metabolism; galactose metabolism. In terms of biological role, catalyzes the interconversion between UDP-glucose and UDP-galactose. The polypeptide is UDP-glucose 4-epimerase 2 (UGE-2) (Oryza sativa subsp. japonica (Rice)).